The following is a 321-amino-acid chain: Ferredoxin--NADP reductase (321 aa).

Residues Glu33, Gln41, Tyr46, Val86, Leu119, Asp277, and Ser318 each contribute to the FAD site.

It belongs to the ferredoxin--NADP reductase type 2 family. In terms of assembly, homodimer. FAD is required as a cofactor.

It catalyses the reaction 2 reduced [2Fe-2S]-[ferredoxin] + NADP(+) + H(+) = 2 oxidized [2Fe-2S]-[ferredoxin] + NADPH. This is Ferredoxin--NADP reductase from Lactococcus lactis subsp. cremoris (strain MG1363).